A 607-amino-acid chain; its full sequence is Probable Ufm1-specific protease 2 (607 aa).

Active-site residues include Cys-440, Asp-564, and His-566.

The protein belongs to the peptidase C78 family.

Functionally, thiol protease which recognizes and hydrolyzes the peptide bond at the C-terminal Gly of UFM1, a ubiquitin-like modifier protein bound to a number of target proteins. Does not hydrolyze SUMO1 or ISG15 ubiquitin-like proteins. The protein is Probable Ufm1-specific protease 2 of Drosophila melanogaster (Fruit fly).